We begin with the raw amino-acid sequence, 331 residues long: Ketol-acid reductoisomerase (NADP(+)) (331 aa).

A KARI N-terminal Rossmann domain is found at alanine 2–threonine 182. NADP(+)-binding positions include tyrosine 25 to glutamine 28, serine 51, serine 53, and aspartate 83 to glutamine 86. The active site involves histidine 108. Glycine 134 is an NADP(+) binding site. One can recognise a KARI C-terminal knotted domain in the interval serine 183–leucine 328. 4 residues coordinate Mg(2+): aspartate 191, glutamate 195, glutamate 227, and glutamate 231. Residue serine 252 participates in substrate binding.

The protein belongs to the ketol-acid reductoisomerase family. Mg(2+) is required as a cofactor.

It catalyses the reaction (2R)-2,3-dihydroxy-3-methylbutanoate + NADP(+) = (2S)-2-acetolactate + NADPH + H(+). It carries out the reaction (2R,3R)-2,3-dihydroxy-3-methylpentanoate + NADP(+) = (S)-2-ethyl-2-hydroxy-3-oxobutanoate + NADPH + H(+). It participates in amino-acid biosynthesis; L-isoleucine biosynthesis; L-isoleucine from 2-oxobutanoate: step 2/4. It functions in the pathway amino-acid biosynthesis; L-valine biosynthesis; L-valine from pyruvate: step 2/4. Functionally, involved in the biosynthesis of branched-chain amino acids (BCAA). Catalyzes an alkyl-migration followed by a ketol-acid reduction of (S)-2-acetolactate (S2AL) to yield (R)-2,3-dihydroxy-isovalerate. In the isomerase reaction, S2AL is rearranged via a Mg-dependent methyl migration to produce 3-hydroxy-3-methyl-2-ketobutyrate (HMKB). In the reductase reaction, this 2-ketoacid undergoes a metal-dependent reduction by NADPH to yield (R)-2,3-dihydroxy-isovalerate. This chain is Ketol-acid reductoisomerase (NADP(+)), found in Crocosphaera subtropica (strain ATCC 51142 / BH68) (Cyanothece sp. (strain ATCC 51142)).